A 123-amino-acid chain; its full sequence is Small ribosomal subunit protein uS11 (123 aa).

This sequence belongs to the universal ribosomal protein uS11 family. Part of the 30S ribosomal subunit. Interacts with proteins S7 and S18. Binds to IF-3.

In terms of biological role, located on the platform of the 30S subunit, it bridges several disparate RNA helices of the 16S rRNA. Forms part of the Shine-Dalgarno cleft in the 70S ribosome. The protein is Small ribosomal subunit protein uS11 of Coxiella burnetii (strain CbuG_Q212) (Coxiella burnetii (strain Q212)).